The chain runs to 916 residues: uncharacterized protein (916 aa).

This is an uncharacterized protein from Micromonas pusilla reovirus (isolate Netherlands/2005) (MpRV).